Here is an 88-residue protein sequence, read N- to C-terminus: Small ribosomal subunit protein bS16c (88 aa).

Component of the chloroplast small ribosomal subunit (SSU). Mature 70S chloroplast ribosomes of higher plants consist of a small (30S) and a large (50S) subunit. The 30S small subunit contains 1 molecule of ribosomal RNA (16S rRNA) and 24 different proteins. The 50S large subunit contains 3 rRNA molecules (23S, 5S and 4.5S rRNA) and 33 different proteins.

The protein resides in the plastid. The protein localises to the chloroplast. In terms of biological role, component of the chloroplast ribosome (chloro-ribosome), a dedicated translation machinery responsible for the synthesis of chloroplast genome-encoded proteins, including proteins of the transcription and translation machinery and components of the photosynthetic apparatus. This is Small ribosomal subunit protein bS16c from Spinacia oleracea (Spinach).